A 433-amino-acid polypeptide reads, in one-letter code: Pyrimidine-nucleoside phosphorylase (433 aa).

Residue 81–83 (KHS) coordinates phosphate. Residues G88 and T90 each coordinate K(+). Phosphate contacts are provided by residues T92, 108 to 110 (KMS), and T120. R168 and K187 together coordinate substrate. Positions 243, 246, and 255 each coordinate K(+).

Belongs to the thymidine/pyrimidine-nucleoside phosphorylase family. As to quaternary structure, homodimer. K(+) serves as cofactor.

The enzyme catalyses uridine + phosphate = alpha-D-ribose 1-phosphate + uracil. It catalyses the reaction thymidine + phosphate = 2-deoxy-alpha-D-ribose 1-phosphate + thymine. The catalysed reaction is 2'-deoxyuridine + phosphate = 2-deoxy-alpha-D-ribose 1-phosphate + uracil. Catalyzes phosphorolysis of the pyrimidine nucleosides uridine, thymidine and 2'-deoxyuridine with the formation of the corresponding pyrimidine base and ribose-1-phosphate. This Staphylococcus haemolyticus (strain JCSC1435) protein is Pyrimidine-nucleoside phosphorylase (pdp).